We begin with the raw amino-acid sequence, 529 residues long: Zinc metalloproteinase MspA (529 aa).

The signal sequence occupies residues 1-24 (MHHNYYLSPLAVALALGMVSPAKA). Residues 25-204 (ADPILLQNAS…PFVQWNDIKT (180 aa)) constitute a propeptide that is removed on maturation. H365 is a binding site for Zn(2+). E366 is an active-site residue. H369 and E389 together coordinate Zn(2+). H451 (proton donor) is an active-site residue.

Belongs to the peptidase M4 family. Zn(2+) is required as a cofactor.

This is Zinc metalloproteinase MspA (mspA) from Legionella longbeachae.